The primary structure comprises 71 residues: Large ribosomal subunit protein uL29 (71 aa).

It belongs to the universal ribosomal protein uL29 family.

The protein is Large ribosomal subunit protein uL29 (rpl29) of Aeropyrum pernix (strain ATCC 700893 / DSM 11879 / JCM 9820 / NBRC 100138 / K1).